We begin with the raw amino-acid sequence, 378 residues long: Alginate lyase (378 aa).

An N-terminal signal peptide occupies residues M1–A28. Residues S67–K68, H140–T141, and Y258 each bind substrate.

The protein belongs to the polysaccharide lyase 5 family.

The protein resides in the periplasm. The enzyme catalyses Eliminative cleavage of alginate to give oligosaccharides with 4-deoxy-alpha-L-erythro-hex-4-enuronosyl groups at their non-reducing ends and beta-D-mannuronate at their reducing end.. With respect to regulation, the monovalent cation sodium enhances activity but is not absolutely required. Catalyzes the depolymerization of alginate by cleaving the beta-1,4 glycosidic bond between two adjacent sugar residues via a beta-elimination mechanism. Degrades deacetylated polymannuronate (polyM) alginate from P.aeruginosa more efficiently than non-deacetylated polyM and alginate from M.pyrifera. AlgL from P.syringae also degrades its own alginate, which may indicate a role in cleaving preformed alginate and/or in determining the length of the alginate polymer. May serve to degrade mislocalized alginate that is trapped in the periplasmic space. This Pseudomonas syringae pv. syringae protein is Alginate lyase.